A 305-amino-acid chain; its full sequence is Aspartate carbamoyltransferase catalytic subunit (305 aa).

2 residues coordinate carbamoyl phosphate: Arg60 and Thr61. Residue Lys88 coordinates L-aspartate. Carbamoyl phosphate is bound by residues Arg110, His138, and Gln141. 2 residues coordinate L-aspartate: Arg171 and Arg222. Positions 263 and 264 each coordinate carbamoyl phosphate.

It belongs to the aspartate/ornithine carbamoyltransferase superfamily. ATCase family. Heterododecamer (2C3:3R2) of six catalytic PyrB chains organized as two trimers (C3), and six regulatory PyrI chains organized as three dimers (R2).

The enzyme catalyses carbamoyl phosphate + L-aspartate = N-carbamoyl-L-aspartate + phosphate + H(+). It participates in pyrimidine metabolism; UMP biosynthesis via de novo pathway; (S)-dihydroorotate from bicarbonate: step 2/3. In terms of biological role, catalyzes the condensation of carbamoyl phosphate and aspartate to form carbamoyl aspartate and inorganic phosphate, the committed step in the de novo pyrimidine nucleotide biosynthesis pathway. The sequence is that of Aspartate carbamoyltransferase catalytic subunit from Halalkalibacterium halodurans (strain ATCC BAA-125 / DSM 18197 / FERM 7344 / JCM 9153 / C-125) (Bacillus halodurans).